A 284-amino-acid chain; its full sequence is Protein phosphatase 1 regulatory subunit 3B (284 aa).

Residues 61-64 carry the PP1-binding motif motif; that stretch reads RVSF. A CBM21 domain is found at 124-232; it reads RNRLQTDHVC…SNKGKNYRII (109 aa). S260 carries the post-translational modification Phosphoserine.

Interacts with glycogen, PPP1CC catalytic subunit of PP1 and PYGL. Associates with glycogen particles. Forms complexes with debranching enzyme, glycogen phosphorylase, glycogen synthase and phosphorylase kinase which is necessary for its regulation of PP1 activity.

Functionally, acts as a glycogen-targeting subunit for phosphatase PP1. Facilitates interaction of the PP1 with enzymes of the glycogen metabolism and regulates its activity. Suppresses the rate at which PP1 dephosphorylates (inactivates) glycogen phosphorylase and enhances the rate at which it activates glycogen synthase and therefore limits glycogen breakdown. Its activity is inhibited by PYGL, resulting in inhibition of the glycogen synthase and glycogen phosphorylase phosphatase activities of PP1. Dramatically increases basal and insulin-stimulated glycogen synthesis upon overexpression in hepatocytes. The protein is Protein phosphatase 1 regulatory subunit 3B (PPP1R3B) of Bos taurus (Bovine).